The following is a 299-amino-acid chain: Protein-methionine-sulfoxide reductase catalytic subunit MsrP (299 aa).

A signal peptide (tat-type signal) is located at residues 1-44; that stretch reads MAHRWINDLTPADITPRGAWMNRRQVMAGMAGAGLAAFAGSAQA. Mo-molybdopterin contacts are provided by residues asparagine 59, 62–63, cysteine 117, threonine 152, asparagine 200, arginine 205, and 216–218; these read YE and SIK.

It belongs to the MsrP family. As to quaternary structure, heterodimer of a catalytic subunit (MsrP) and a heme-binding subunit (MsrQ). Requires Mo-molybdopterin as cofactor. Post-translationally, predicted to be exported by the Tat system. The position of the signal peptide cleavage has not been experimentally proven.

The protein resides in the periplasm. The catalysed reaction is L-methionyl-[protein] + a quinone + H2O = L-methionyl-(S)-S-oxide-[protein] + a quinol. The enzyme catalyses L-methionyl-[protein] + a quinone + H2O = L-methionyl-(R)-S-oxide-[protein] + a quinol. In terms of biological role, part of the MsrPQ system that repairs oxidized periplasmic proteins containing methionine sulfoxide residues (Met-O), using respiratory chain electrons. Thus protects these proteins from oxidative-stress damage caused by reactive species of oxygen and chlorine generated by the host defense mechanisms. MsrPQ is essential for the maintenance of envelope integrity under bleach stress, rescuing a wide series of structurally unrelated periplasmic proteins from methionine oxidation. The catalytic subunit MsrP is non-stereospecific, being able to reduce both (R-) and (S-) diastereoisomers of methionine sulfoxide. The polypeptide is Protein-methionine-sulfoxide reductase catalytic subunit MsrP (Ruegeria pomeroyi (strain ATCC 700808 / DSM 15171 / DSS-3) (Silicibacter pomeroyi)).